Consider the following 497-residue polypeptide: MLKSTATRSITRLSQVYNVPAATYRACLVSRRFYSPPAAGVKLDDNFSLETHTDIQAAAKAQASARASASGTTPDAVVASGSTAMSHAYQENTGFGTRPIYLDMQATTPTDPRVLDTMLKFYTGLYGNPHSNTHSYGWETNTAVENARAHVAKMINADPKEIIFTSGATESNNMVLKGVPRFYKKTKKHIITTRTEHKCVLEAARAMMKEGFEVTFLNVDDQGLIDLKELEDAIRPDTCLVSVMAVNNEIGVIQPIKEIGAICRKNKIYFHTDAAQAYGKIHIDVNEMNIDLLSISSHKIYGPKGIGAIYVRRRPRVRLEPLLSGGGQERGLRSGTLAPPLVAGFGEAARLMKKEFDNDQAHIKRLSDKLVKGLLSAEHTTLNGSPDHRYPGCVNVSFAYVEGESLLMALRDIALSSGSACTSASLEPSYVLHALGKDDALAHSSIRFGIGRFSTEEEVDYVVKAVSDRVKFLRELSPLWEMVQEGIDLNSIKWSGH.

A mitochondrion-targeting transit peptide spans 1 to 33 (MLKSTATRSITRLSQVYNVPAATYRACLVSRRF). Pyridoxal 5'-phosphate-binding positions include 168-169 (AT), Asn248, Gln276, and 296-298 (SSH). Position 299 is an N6-(pyridoxal phosphate)lysine (Lys299). Thr336 provides a ligand contact to pyridoxal 5'-phosphate. The active-site Cysteine persulfide intermediate is Cys421. Cys421 contributes to the [2Fe-2S] cluster binding site.

This sequence belongs to the class-V pyridoxal-phosphate-dependent aminotransferase family. NifS/IscS subfamily. Pyridoxal 5'-phosphate is required as a cofactor.

It localises to the mitochondrion. It carries out the reaction (sulfur carrier)-H + L-cysteine = (sulfur carrier)-SH + L-alanine. Functionally, catalyzes the removal of elemental sulfur from cysteine to produce alanine. It supplies the inorganic sulfur for iron-sulfur (Fe-S) clusters. Plays a role in both tRNA-processing and mitochondrial metabolism. Involved in the 2-thio-modification of both 5-carboxymethylaminomethyl-2-thiouridine in mitochondrial tRNAs and 5-methoxycarbonylmethyl-2-thiouridine (mcm5s2U) in cytoplasmic tRNAs. This Saccharomyces cerevisiae (strain ATCC 204508 / S288c) (Baker's yeast) protein is Cysteine desulfurase, mitochondrial.